A 316-amino-acid chain; its full sequence is tRNA dimethylallyltransferase (316 aa).

Glycine 14–threonine 21 provides a ligand contact to ATP. Threonine 16 to threonine 21 contacts substrate. The interval aspartate 39–glutamine 42 is interaction with substrate tRNA.

Belongs to the IPP transferase family. Monomer. Requires Mg(2+) as cofactor.

The catalysed reaction is adenosine(37) in tRNA + dimethylallyl diphosphate = N(6)-dimethylallyladenosine(37) in tRNA + diphosphate. Functionally, catalyzes the transfer of a dimethylallyl group onto the adenine at position 37 in tRNAs that read codons beginning with uridine, leading to the formation of N6-(dimethylallyl)adenosine (i(6)A). The sequence is that of tRNA dimethylallyltransferase from Bacillus cytotoxicus (strain DSM 22905 / CIP 110041 / 391-98 / NVH 391-98).